The sequence spans 271 residues: Homeobox protein pal-1 (271 aa).

Disordered regions lie at residues 1–25 (MSVD…TNVN), 100–135 (PPLS…ASSS), and 178–202 (GSAG…TNNV). Low complexity-rich tracts occupy residues 100-117 (PPLS…YPSP) and 125-135 (STSSGIGASSS). Over residues 189–202 (DTKSLPTGPGTNNV) the composition is skewed to polar residues. Positions 207 to 266 (ADKYRMVYSDYQRLELEKEFHTSAFITSDRKSQLSTMLSLTERQIKIWFQNRRAKDRRDK) form a DNA-binding region, homeobox.

It belongs to the Caudal homeobox family. Interacts with tir-1 and let-756.

It localises to the nucleus. Its subcellular location is the chromosome. It is found in the centromere. The protein localises to the kinetochore. Transcriptional activator. Interacts with promoter regions for tbx-8.9, tbx-9, elt-1, hnd-1, scrt-1, and vab-7 genes. Binds the sequence ATTTATGAC. Binds to the enhancer region of the hlh-1 gene promoter during embryonic body wall muscle development. Activates the gene for mab-5 in embryo development. Necessary for vab-7 expression in C blastomeres in the posterior of embryos. Required for posterior V6 neuroectoblast cell fate specification during postembryonic neurogenesis (patterning) which generates the characteristic ray lineage during male tail development. Binds to ced-3 promoter and activated expression which is crucial for tail-spike cell death. Has a role in E cell specification in endoderm development and body wall muscle development. This is Homeobox protein pal-1 from Caenorhabditis briggsae.